A 76-amino-acid chain; its full sequence is MSTEKLEASEEPQAPLANTSETNSIKGDTENIVTVFDLANEIEKSLKDVQRQMKENDDEFSRSIQAIEDKLNKMSR.

Residues 1-28 (MSTEKLEASEEPQAPLANTSETNSIKGD) are disordered. Over residues 16-26 (LANTSETNSIK) the composition is skewed to polar residues.

The protein resides in the cytoplasm. Its subcellular location is the bud. It is found in the bud neck. This is an uncharacterized protein from Saccharomyces cerevisiae (strain ATCC 204508 / S288c) (Baker's yeast).